A 100-amino-acid polypeptide reads, in one-letter code: Small ribosomal subunit protein uS14c (100 aa).

Belongs to the universal ribosomal protein uS14 family. In terms of assembly, part of the 30S ribosomal subunit.

Its subcellular location is the plastid. It localises to the chloroplast. Functionally, binds 16S rRNA, required for the assembly of 30S particles. The chain is Small ribosomal subunit protein uS14c from Nephroselmis olivacea (Green alga).